Reading from the N-terminus, the 113-residue chain is U11-theraphotoxin-Hhn1a (113 aa).

Positions 1–21 are cleaved as a signal peptide; sequence MNTVRVTFLLVFVLAVSLGQA. Residues 22–74 constitute a propeptide that is removed on maturation; the sequence is DKDENRMEMQEKTEQGKSYLDFAENLLLQKLEELEAKLLEEDSEESRNSRQRR. Residues 61–83 are disordered; sequence EEDSEESRNSRQRRCIGEGVPCD. 3 cysteine pairs are disulfide-bonded: C75-C90, C82-C95, and C89-C110.

This sequence belongs to the neurotoxin 14 (magi-1) family. 01 (HNTX-16) subfamily. Expressed by the venom gland.

The protein localises to the secreted. Probable ion channel inhibitor. The sequence is that of U11-theraphotoxin-Hhn1a from Cyriopagopus hainanus (Chinese bird spider).